Consider the following 142-residue polypeptide: Hemoglobin subunit alpha-1 (142 aa).

Positions 2–142 (LLSADDKKHI…VSSVLTSKYR (141 aa)) constitute a Globin domain. His-59 provides a ligand contact to O2. His-88 is a heme b binding site.

The protein belongs to the globin family. In terms of assembly, heterotetramer of two alpha chains and two beta chains. In terms of tissue distribution, red blood cells.

Involved in oxygen transport from the lung to the various peripheral tissues. The sequence is that of Hemoglobin subunit alpha-1 (hba1) from Xenopus borealis (Kenyan clawed frog).